The following is a 505-amino-acid chain: Olfactomedin-4 (505 aa).

Residues 1-18 form the signal peptide; that stretch reads MSYSLLFLLALQFCLGSA. 2 N-linked (GlcNAc...) asparagine glycosylation sites follow: Asn64 and Asn128. A coiled-coil region spans residues 174-225; that stretch reads HIIDMLEVEIRNMTLLVEKLESLDQNNVLSIRRQILALKTKLKECEASKSDL. The Olfactomedin-like domain maps to 237–499; it reads SCSHGGVVNI…LLNYDLVFLQ (263 aa). A disulfide bridge links Cys238 with Cys429.

In terms of assembly, homomultimer; disulfide-linked. Interacts with NDUFA13. Interacts with cell surface lectins (locutions ricinus communis agglutinin I, concanavalin A and wheat germ agglutinin) and cadherin. In terms of processing, N-glycosylated.

The protein resides in the secreted. The protein localises to the extracellular space. It is found in the mitochondrion. Functionally, may promote proliferation of pancreatic cancer cells by favoring the transition from the S to G2/M phase. In myeloid leukemic cell lines, inhibits cell growth and induces cell differentiation and apoptosis. May play a role in the inhibition of EIF4EBP1 phosphorylation/deactivation. Facilitates cell adhesion, most probably through interaction with cell surface lectins and cadherin. The polypeptide is Olfactomedin-4 (Olfm4) (Mus musculus (Mouse)).